We begin with the raw amino-acid sequence, 146 residues long: Large ribosomal subunit protein bL9 (146 aa).

This sequence belongs to the bacterial ribosomal protein bL9 family.

Its function is as follows. Binds to the 23S rRNA. This is Large ribosomal subunit protein bL9 from Nautilia profundicola (strain ATCC BAA-1463 / DSM 18972 / AmH).